A 276-amino-acid chain; its full sequence is NADPH-dependent 7-cyano-7-deazaguanine reductase (276 aa).

Position 83–85 (83–85) interacts with substrate; the sequence is IES. 85 to 86 lines the NADPH pocket; sequence SK. Cys-184 serves as the catalytic Thioimide intermediate. The active-site Proton donor is Asp-191. Residue 223 to 224 coordinates substrate; that stretch reads HE. Residue 252 to 253 participates in NADPH binding; the sequence is RG.

Belongs to the GTP cyclohydrolase I family. QueF type 2 subfamily. Homodimer.

The protein localises to the cytoplasm. It catalyses the reaction 7-aminomethyl-7-carbaguanine + 2 NADP(+) = 7-cyano-7-deazaguanine + 2 NADPH + 3 H(+). It functions in the pathway tRNA modification; tRNA-queuosine biosynthesis. Catalyzes the NADPH-dependent reduction of 7-cyano-7-deazaguanine (preQ0) to 7-aminomethyl-7-deazaguanine (preQ1). The sequence is that of NADPH-dependent 7-cyano-7-deazaguanine reductase from Pseudomonas syringae pv. tomato (strain ATCC BAA-871 / DC3000).